The following is a 335-amino-acid chain: tRNA N6-adenosine threonylcarbamoyltransferase (335 aa).

Fe cation is bound by residues histidine 110 and histidine 114. Substrate contacts are provided by residues 132–136 (LVSGG), aspartate 165, glycine 178, and asparagine 271. Position 299 (aspartate 299) interacts with Fe cation.

It belongs to the KAE1 / TsaD family. Requires Fe(2+) as cofactor.

The protein resides in the cytoplasm. The catalysed reaction is L-threonylcarbamoyladenylate + adenosine(37) in tRNA = N(6)-L-threonylcarbamoyladenosine(37) in tRNA + AMP + H(+). Functionally, required for the formation of a threonylcarbamoyl group on adenosine at position 37 (t(6)A37) in tRNAs that read codons beginning with adenine. Is involved in the transfer of the threonylcarbamoyl moiety of threonylcarbamoyl-AMP (TC-AMP) to the N6 group of A37, together with TsaE and TsaB. TsaD likely plays a direct catalytic role in this reaction. This chain is tRNA N6-adenosine threonylcarbamoyltransferase, found in Campylobacter jejuni subsp. jejuni serotype O:6 (strain 81116 / NCTC 11828).